A 96-amino-acid chain; its full sequence is Small ribosomal subunit protein bS6 (96 aa).

The protein belongs to the bacterial ribosomal protein bS6 family.

Its function is as follows. Binds together with bS18 to 16S ribosomal RNA. This Streptococcus equi subsp. equi (strain 4047) protein is Small ribosomal subunit protein bS6.